Reading from the N-terminus, the 127-residue chain is Large ribosomal subunit protein bL17 (127 aa).

The protein belongs to the bacterial ribosomal protein bL17 family. In terms of assembly, part of the 50S ribosomal subunit. Contacts protein L32.

In Leuconostoc citreum (strain KM20), this protein is Large ribosomal subunit protein bL17.